Reading from the N-terminus, the 270-residue chain is MHALGRIPTLTLLIFINIFVSGSSCTDENQTIQNDSSSSLTQVNTTMSVQMDKKALLCCFSSPLINAVLITWIIKHRHLPSCTIAYNLDKKTNETSCLGRNITWASTPDHSPELQISAVALQHEGTYTCEIVTPEGNLEKVYDLQVLVPPEVTYFPGKNRTAVCEAMAGKPAAQISWTPDGDCVTKSESHSNGTVTVRSTCHWEQNNVSVVSCLVSHSTGNQSLSIELSQGTMTTPRSLLTILYVKMALLVIILLNVGFAFFQKRNFART.

The signal sequence occupies residues 1 to 25; that stretch reads MHALGRIPTLTLLIFINIFVSGSSC. The 120-residue stretch at 26-145 folds into the Ig-like V-type domain; it reads TDENQTIQND…GNLEKVYDLQ (120 aa). The Extracellular segment spans residues 26–241; it reads TDENQTIQND…TMTTPRSLLT (216 aa). N-linked (GlcNAc...) asparagine glycosylation is found at N29 and N44. 4 disulfides stabilise this stretch: C58–C129, C82–C97, C164–C213, and C183–C201. An Ig-like C2-type domain is found at 134 to 229; sequence PEGNLEKVYD…GNQSLSIELS (96 aa). Residue N192 is glycosylated (N-linked (GlcNAc...) asparagine). A helical membrane pass occupies residues 242 to 262; the sequence is ILYVKMALLVIILLNVGFAFF. Over 263–270 the chain is Cytoplasmic; the sequence is QKRNFART.

The protein belongs to the CD200R family. As to quaternary structure, interacts with TYROBP. In terms of tissue distribution, highly expressed in monocytes, NK cells and a subset of NKT cells. Weakly expressed in granulocytes and B-cells (at protein level). Expressed in brain, lung, testis, thymus, intestine and uterus. Expressed in bone marrow derived-macrophage and dendritic cells and mast cells.

Its subcellular location is the membrane. In terms of biological role, involved in the recruitment or surface expression of the TYROBP receptor. This chain is Cell surface glycoprotein CD200 receptor 4 (Cd200r4), found in Mus musculus (Mouse).